We begin with the raw amino-acid sequence, 241 residues long: MTGSIRSSTAGIDVRQLGSVDYQTAWQMQRDLADARVAGGPDTLLLLQHPAVYTAGRRTEPHERPGPVFAGAAGAEAIDVVDTDRGGKITWHGPGQLVGYPIIGLAQPLDVVNYVRRLEESLIKVCLDLGLETGRVEGRSGVWIPAGSGRPERKIAAIGVRVSRATTLHGFALNCDCDLAAFTAIVPCGISDAGVTSLSAELGRTVGVEEVRGAVADAVCNALDGALPVRDHPGARVASST.

Residues 38 to 227 (AGGPDTLLLL…AVCNALDGAL (190 aa)) enclose the BPL/LPL catalytic domain. Residues 85-92 (RGGKITWH), 157-159 (AIG), and 170-172 (GFA) contribute to the substrate site. The Acyl-thioester intermediate role is filled by C188.

Belongs to the LipB family.

It localises to the cytoplasm. The catalysed reaction is octanoyl-[ACP] + L-lysyl-[protein] = N(6)-octanoyl-L-lysyl-[protein] + holo-[ACP] + H(+). It functions in the pathway protein modification; protein lipoylation via endogenous pathway; protein N(6)-(lipoyl)lysine from octanoyl-[acyl-carrier-protein]: step 1/2. In terms of biological role, catalyzes the transfer of endogenously produced octanoic acid from octanoyl-acyl-carrier-protein onto the lipoyl domains of lipoate-dependent enzymes. Lipoyl-ACP can also act as a substrate although octanoyl-ACP is likely to be the physiological substrate. This chain is Octanoyltransferase, found in Mycobacterium marinum (strain ATCC BAA-535 / M).